The chain runs to 555 residues: Neutral amino acid transporter B(0) (555 aa).

At Met1 the chain carries N-acetylmethionine. Over 1–52 (MAVDPPKADPKGVVAVDPTANCGSGLKSREDQGAKAGGCCSSRDQVCRCLRA) the chain is Cytoplasmic. A helical transmembrane segment spans residues 53–82 (NLLVLLTVAAAVAGVVLGLGVSAAGGAEAL). The Extracellular segment spans residues 83 to 95 (GHARFTAFAFPGE). Residues 96 to 117 (LLLRLLEMIILPLVVCSLIGGA) traverse the membrane as a helical segment. Over 118-131 (ASLDPSALGRLGAW) the chain is Cytoplasmic. The chain crosses the membrane as a helical span at residues 132-154 (ALLFFLVTTLLSSALGVALALAL). Residues 155–239 (KPGAAFAAIN…SNATMDQPHC (85 aa)) are Extracellular-facing. 2 N-linked (GlcNAc...) asparagine glycosylation sites follow: Asn164 and Asn231. Residues 240–262 (EMKMNILGLVVFAIVFGVALRKL) traverse the membrane as a helical segment. Residues 263 to 271 (GPEGELLIR) lie on the Cytoplasmic side of the membrane. Residues 272 to 299 (FFNSFNDATMVLVSWIMWYAPIGILFLV) traverse the membrane as a helical segment. Topologically, residues 300–320 (AGKIVEMKDIRQLFIGLGKYI) are extracellular. A helical transmembrane segment spans residues 321 to 342 (VCCLLGHAIHGLLVLPLIYFLF). Topologically, residues 343–347 (TRKNP) are cytoplasmic. Residues 348 to 378 (YRFLWGIVTPLATAFGTSSSSATLPLMMKCV) constitute an intramembrane region (discontinuously helical). Over 379–387 (EEKNGVAKH) the chain is Cytoplasmic. The helical transmembrane segment at 388 to 414 (ISRFILPIGATVNMDGAALFQCVAAVF) threads the bilayer. Positions 396, 398, and 400 each coordinate Na(+). The Extracellular segment spans residues 415–427 (IAQLNGMSLDFVK). Positions 428-461 (IITILVTATASSVGAAGIPAGGVLTLAIILEAIS) form an intramembrane region, discontinuously helical. At 462–474 (LPVKDISLILAVD) the chain is on the extracellular side. A helical membrane pass occupies residues 475–496 (WLVDRSCTVLNVEGDAFGAGLL). 2 residues coordinate Na(+): Asn485 and Asp489. The Cytoplasmic portion of the chain corresponds to 497–555 (QSYVDRTKMPSSEPELIQVKNDVSLKPLPLATEEGNPLLKQCREPSGDSSATCEKESVM). Residues Ser507, Ser508, Ser520, Ser545, and Ser553 each carry the phosphoserine modification. The interval 534–555 (LLKQCREPSGDSSATCEKESVM) is disordered.

This sequence belongs to the dicarboxylate/amino acid:cation symporter (DAACS) (TC 2.A.23) family. In terms of assembly, homotrimer.

The protein resides in the cell membrane. It is found in the melanosome. The enzyme catalyses L-glutamine(out) + L-serine(in) + Na(+)(out) = L-glutamine(in) + L-serine(out) + Na(+)(in). It carries out the reaction L-glutamine(in) + L-serine(out) + Na(+)(out) = L-glutamine(out) + L-serine(in) + Na(+)(in). It catalyses the reaction L-threonine(in) + L-glutamine(out) + Na(+)(out) = L-threonine(out) + L-glutamine(in) + Na(+)(in). The catalysed reaction is L-threonine(out) + L-glutamine(in) + Na(+)(out) = L-threonine(in) + L-glutamine(out) + Na(+)(in). The enzyme catalyses L-asparagine(in) + L-glutamine(out) + Na(+)(out) = L-asparagine(out) + L-glutamine(in) + Na(+)(in). It carries out the reaction L-asparagine(out) + L-glutamine(in) + Na(+)(out) = L-asparagine(in) + L-glutamine(out) + Na(+)(in). It catalyses the reaction L-glutamine(in) + L-alanine(out) + Na(+)(out) = L-glutamine(out) + L-alanine(in) + Na(+)(in). The catalysed reaction is L-valine(out) + L-glutamine(in) + Na(+)(out) = L-valine(in) + L-glutamine(out) + Na(+)(in). The enzyme catalyses L-glutamine(in) + L-methionine(out) + Na(+)(out) = L-glutamine(out) + L-methionine(in) + Na(+)(in). It carries out the reaction L-glutamine(in) + L-glutamate(out) + Na(+)(out) + H(+)(out) = L-glutamine(out) + L-glutamate(in) + Na(+)(in) + H(+)(in). It catalyses the reaction D-serine(in) + L-glutamine(out) + Na(+)(out) = D-serine(out) + L-glutamine(in) + Na(+)(in). The catalysed reaction is D-serine(in) + L-alanine(out) + Na(+)(out) = D-serine(out) + L-alanine(in) + Na(+)(in). The enzyme catalyses nitrate(in) = nitrate(out). It carries out the reaction iodide(out) = iodide(in). It catalyses the reaction thiocyanate(in) = thiocyanate(out). Down-regulated at acidic pH. Its function is as follows. Sodium-coupled antiporter of neutral amino acids. In a tri-substrate transport cycle, exchanges neutral amino acids between the extracellular and intracellular compartments, coupled to the inward cotransport of at least one sodium ion. The preferred substrate is the essential amino acid L-glutamine, a precursor for biosynthesis of proteins, nucleotides and amine sugars as well as an alternative fuel for mitochondrial oxidative phosphorylation. Exchanges L-glutamine with other neutral amino acids such as L-serine, L-threonine and L-asparagine in a bidirectional way. Provides L-glutamine to proliferating stem and activated cells driving the metabolic switch toward cell differentiation. The transport cycle is usually pH-independent, with the exception of L-glutamate. Transports extracellular L-glutamate coupled to the cotransport of one proton and one sodium ion in exchange for intracellular L-glutamine counter-ion. May provide for L-glutamate uptake in glial cells regulating glutamine/glutamate cycle in the nervous system. Can transport D-amino acids. Mediates D-serine release from the retinal glia potentially affecting NMDA receptor function in retinal neurons. Displays sodium- and amino acid-dependent but uncoupled channel-like anion conductance with a preference SCN(-) &gt;&gt; NO3(-) &gt; I(-) &gt; Cl(-). Through binding of the fusogenic protein syncytin-1/ERVW-1 may mediate trophoblasts syncytialization, the spontaneous fusion of their plasma membranes, an essential process in placental development. The protein is Neutral amino acid transporter B(0) (Slc1a5) of Rattus norvegicus (Rat).